The following is a 378-amino-acid chain: UDP-N-acetylglucosamine 2-epimerase (378 aa).

Residue His214 is part of the active site.

Belongs to the UDP-N-acetylglucosamine 2-epimerase family.

The enzyme catalyses UDP-N-acetyl-alpha-D-glucosamine = UDP-N-acetyl-alpha-D-mannosamine. The protein operates within bacterial outer membrane biogenesis; LPS O-antigen biosynthesis. This is UDP-N-acetylglucosamine 2-epimerase (rfbC) from Salmonella borreze.